A 209-amino-acid chain; its full sequence is MGTVNSLEAGIDEAGRGPVIGPMVIAIVGWSNSEAEGIGVKDSKQLTPSGRSRLYKLIVSKAPCVRHVIVEPSEIDYYVNRGLLNELEAIKMSELIKACSGVTRVYVDSPDPNPSRFRGFINVKDVELIVLNHADESIPLVSAASIVAKVIRDTIISRLKETYGDFGSGYPSDPRTISALRRWINNGTLPPIVRRSWRTIKRMTNSRLF.

Residues 6–209 (SLEAGIDEAG…IKRMTNSRLF (204 aa)) enclose the RNase H type-2 domain. Residues Asp-12, Glu-13, and Asp-108 each contribute to the a divalent metal cation site.

This sequence belongs to the RNase HII family. It depends on Mn(2+) as a cofactor. Mg(2+) is required as a cofactor.

The protein localises to the cytoplasm. The enzyme catalyses Endonucleolytic cleavage to 5'-phosphomonoester.. Endonuclease that specifically degrades the RNA of RNA-DNA hybrids. This is Ribonuclease HII from Caldivirga maquilingensis (strain ATCC 700844 / DSM 13496 / JCM 10307 / IC-167).